The primary structure comprises 1376 residues: Spike glycoprotein (1376 aa).

Residues 1-13 (MLFVFILFLPSCL) form the signal peptide. The Extracellular segment spans residues 14-1317 (GYIGDFRCIQ…GTYEMYVKWP (1304 aa)). Residues 15 to 296 (YIGDFRCIQT…SYISEIKCKT (282 aa)) form the BetaCoV S1-NTD domain. A receptor binding site region spans residues 15-330 (YIGDFRCIQT…RRVPNLPDCK (316 aa)). Cystine bridges form between Cys-21–Cys-158, Cys-153–Cys-187, Cys-165–Cys-246, Cys-284–Cys-294, and Cys-329–Cys-354. Asn-31, Asn-60, and Asn-134 each carry an N-linked (GlcNAc...) asparagine; by host glycan. A glycan (N-linked (GlcNAc...) asparagine; by host) is linked at Asn-192. One can recognise a BetaCoV S1-CTD domain in the interval 327-618 (PDCKIEEWLT…GINSGTTCST (292 aa)). Asn-357 carries N-linked (GlcNAc...) asparagine; by host glycosylation. Disulfide bonds link Cys-372–Cys-425 and Cys-384–Cys-616. Residues Asn-435, Asn-677, Asn-709, Asn-717, Asn-789, and Asn-806 are each glycosylated (N-linked (GlcNAc...) asparagine; by host). Fusion peptide stretches follow at residues 922–943 (SAIEDLLFDKVKLSDVGFVEAY) and 941–961 (EAYNNCTGGQEVRDLLCVQSF). The N-linked (GlcNAc...) asparagine; by host glycan is linked to Asn-945. A disulfide bridge connects residues Cys-946 and Cys-957. The heptad repeat 1 stretch occupies residues 1022–1072 (QKMIASAFNNALGAIQEGFDATNSALGKIQSVVNANAEALNNLLNQLSNRF). Residues 1051–1095 (QSVVNANAEALNNLLNQLSNRFGAISASLQEILTRLDRVEAKAQI) are a coiled coil. Asn-1232, Asn-1242, Asn-1261, Asn-1277, and Asn-1298 each carry an N-linked (GlcNAc...) asparagine; by host glycan. The heptad repeat 2 stretch occupies residues 1266–1306 (APDLSLDFEKLNVTFLDLTYEMNRIQDAIKKLNESYINLKE). Residues 1279–1307 (TFLDLTYEMNRIQDAIKKLNESYINLKEV) adopt a coiled-coil conformation. The chain crosses the membrane as a helical span at residues 1318–1338 (WYVWLLIGLAGVAVCVLLFFI). Over 1339 to 1376 (CCCTGCGSCCFRKCGSCCDEYGGHQDSIVIYNISAHED) the chain is Cytoplasmic. Positions 1372-1376 (SAHED) match the KxHxx motif.

This sequence belongs to the betacoronaviruses spike protein family. As to quaternary structure, homotrimer; each monomer consists of a S1 and a S2 subunit. The resulting peplomers protrude from the virus surface as spikes. Specific enzymatic cleavages in vivo yield mature proteins. The precursor is processed into S1 and S2 by host cell furin or another cellular protease to yield the mature S1 and S2 proteins. Additionally, a second cleavage leads to the release of a fusion peptide after viral attachment to host cell receptor. Post-translationally, the cytoplasmic Cys-rich domain is palmitoylated. Spike glycoprotein is digested within host endosomes.

The protein localises to the virion membrane. Its subcellular location is the host endoplasmic reticulum-Golgi intermediate compartment membrane. It is found in the host cell membrane. In terms of biological role, attaches the virion to the cell membrane by interacting with host receptor, initiating the infection. Mediates fusion of the virion and cellular membranes by acting as a class I viral fusion protein. Under the current model, the protein has at least three conformational states: pre-fusion native state, pre-hairpin intermediate state, and post-fusion hairpin state. During viral and target cell membrane fusion, the coiled coil regions (heptad repeats) assume a trimer-of-hairpins structure, positioning the fusion peptide in close proximity to the C-terminal region of the ectodomain. The formation of this structure appears to drive apposition and subsequent fusion of viral and target cell membranes. Its function is as follows. Acts as a viral fusion peptide which is unmasked following S2 cleavage occurring upon virus endocytosis. The chain is Spike glycoprotein from Mus musculus (Mouse).